The chain runs to 339 residues: Riboflavin biosynthesis protein RibD (339 aa).

The deaminase stretch occupies residues 1–152 (MNVEQVKSID…REWLHKQRTG (152 aa)). Residues 7–129 (KSIDEAMGLA…RLSAAGLQVR (123 aa)) enclose the CMP/dCMP-type deaminase domain. His-57 is a Zn(2+) binding site. Glu-59 serves as the catalytic Proton donor. 2 residues coordinate Zn(2+): Cys-82 and Cys-91. The interval 153-339 (LPHVTWKYAT…PDLLLSLVAR (187 aa)) is reductase. NADP(+) contacts are provided by residues Ala-161 and 168-171 (SAAA). Ser-175 is a substrate binding site. Trp-177 contacts NADP(+). A substrate-binding site is contributed by Arg-191. NADP(+)-binding residues include Thr-203 and Asp-207. The substrate site is built by Leu-211, Arg-214, and Glu-272. 274-280 (GPTLAGA) provides a ligand contact to NADP(+).

It in the N-terminal section; belongs to the cytidine and deoxycytidylate deaminase family. This sequence in the C-terminal section; belongs to the HTP reductase family. Requires Zn(2+) as cofactor.

It carries out the reaction 2,5-diamino-6-hydroxy-4-(5-phosphoribosylamino)-pyrimidine + H2O + H(+) = 5-amino-6-(5-phospho-D-ribosylamino)uracil + NH4(+). It catalyses the reaction 5-amino-6-(5-phospho-D-ribitylamino)uracil + NADP(+) = 5-amino-6-(5-phospho-D-ribosylamino)uracil + NADPH + H(+). Its pathway is cofactor biosynthesis; riboflavin biosynthesis; 5-amino-6-(D-ribitylamino)uracil from GTP: step 2/4. It participates in cofactor biosynthesis; riboflavin biosynthesis; 5-amino-6-(D-ribitylamino)uracil from GTP: step 3/4. Converts 2,5-diamino-6-(ribosylamino)-4(3h)-pyrimidinone 5'-phosphate into 5-amino-6-(ribosylamino)-2,4(1h,3h)-pyrimidinedione 5'-phosphate. The sequence is that of Riboflavin biosynthesis protein RibD (ribD) from Mycobacterium tuberculosis (strain CDC 1551 / Oshkosh).